Consider the following 346-residue polypeptide: UPF0283 membrane protein VP1870 (346 aa).

The disordered stretch occupies residues 1–30 (MSELKQKQIFSEKALEKEQQSDSPELTAQK). Polar residues predominate over residues 21–30 (SDSPELTAQK). Transmembrane regions (helical) follow at residues 73-93 (VFATFAGLVGWQAVDSVVTAV) and 98-118 (WLALGWVGFITAVASLGLGAI).

It belongs to the UPF0283 family.

Its subcellular location is the cell inner membrane. In Vibrio parahaemolyticus serotype O3:K6 (strain RIMD 2210633), this protein is UPF0283 membrane protein VP1870.